Consider the following 298-residue polypeptide: Nucleotide-binding protein GK3066 (298 aa).

ATP is bound at residue 17–24 (GMSGAGKT). 68-71 (DLRS) lines the GTP pocket.

It belongs to the RapZ-like family.

Displays ATPase and GTPase activities. The chain is Nucleotide-binding protein GK3066 from Geobacillus kaustophilus (strain HTA426).